Reading from the N-terminus, the 324-residue chain is Esterase FPSE_08126 (324 aa).

Residues S156, D255, and H285 contribute to the active site.

Belongs to the AB hydrolase 3 family.

Functionally, esterase; part of the Fusarium detoxification of benzoxazolinone cluster involved in the degradation of benzoxazolinones produced by the host plant. Maize, wheat, and rye produce the 2 benzoxazinone phytoanticipins 2,4-dihy-droxy-7-methoxy-1,4-benzoxazin-3-one (DIMBOA) and 2,4-dihydroxy-1,4-benzoxazin-3-one (DIBOA) that, due to their inherent instability once released, spontaneously degrade to the more stable corresponding benzoxazolinones, 6-methoxy-2-benzoxazolinone (MBOA) and 2-benzoxazolinone (BOA), respectively. The first step in the detoxification of benzoxazolinones involves the hydrolysis of the cyclic ester bond of benzoxazolinones by the gamma-lactamase FDB1 to aminophenols. FDB1 is able to convert 2-benzoxazolinone (BOA) into 2-aminophenol (2-AP), as well as 6-methoxy-2-benzoxazolinone (MBOA) into 5-methoxy-2-aminophenol (2-AMP). The N-malonyltransferase FDB2 then metabolizes aminophenols via N-malonylation to non-toxic malonamic acids. FDB2 converts 2-AP into N-(2-hydroxyphenyl) malonamic acid (HPMA) and 2-AMP into N-(2-hydroxy-4-methoxyphenyl) malonamic acid (HMPMA). The cluster also contains 2 transcription factors (FDB3 and FPSE_08121), an aldo-keto reductase (FPSE_08125) that possibly associates with a ketone component of BOA and MBOA degradation, an esterase (FPSE_08126), an acyl-CoA transferase (FPSE_08120), a solute carrier protein (FPSE_08119) and a transmembrane transporter (FPSE_08127) proposed to shuttle metabolites of benzoxazolinone degradation. This Fusarium pseudograminearum (strain CS3096) (Wheat and barley crown-rot fungus) protein is Esterase FPSE_08126.